The chain runs to 1909 residues: Receptor-type tyrosine-protein phosphatase F (1909 aa).

The N-terminal stretch at 1–31 (MVPNTCTSVPLLPVGLPLLLLLSCIQFSSQA) is a signal peptide. At 32–1266 (DSLPNFVRSP…RSVDQPEMLW (1235 aa)) the chain is on the extracellular side. Ig-like C2-type domains are found at residues 35 to 125 (PNFV…AKLT), 137 to 225 (PTID…ANLY), and 233 to 315 (PRFS…AQVS). A disulfide bridge connects residues cysteine 56 and cysteine 109. Position 68-77 (68-77 (WMKKGKKVSS)) interacts with heparin. Asparagine 119 is a glycosylation site (N-linked (GlcNAc...) asparagine). A disulfide bridge connects residues cysteine 158 and cysteine 208. N-linked (GlcNAc...) asparagine glycosylation is found at asparagine 251 and asparagine 296. An intrachain disulfide couples cysteine 254 to cysteine 299. 8 consecutive Fibronectin type-III domains span residues 322 to 412 (PPTS…TGEQ), 417 to 511 (PPLH…TQQG), 515 to 604 (QPSS…TAQS), 609 to 706 (PPQD…TNED), 711 to 819 (PPRK…TTGA), 820 to 914 (VPGK…PEDV), 918 to 1013 (FPLN…TSPA), and 1014 to 1098 (FATS…TAPD). Residues 399-418 (GPPSEPVETRTGEQAPSSPP) form a disordered region. The N-linked (GlcNAc...) asparagine glycan is linked to asparagine 721. Asparagine 963 and asparagine 966 each carry an N-linked (GlcNAc...) asparagine glycan. Residues 1267-1287 (VMGPVLAVVLIIIIVIAILLF) traverse the membrane as a helical segment. Residues 1288–1909 (KRKRASPLPK…YLGSFDHYAT (622 aa)) are Cytoplasmic-facing. Tyrosine-protein phosphatase domains lie at 1354–1609 (FSQE…LLEA) and 1641–1900 (MELE…ALEY). Substrate is bound by residues aspartate 1518, 1550-1556 (CSAGVGR), and glutamine 1594. Cysteine 1550 serves as the catalytic Phosphocysteine intermediate. Cysteine 1841 (phosphocysteine intermediate) is an active-site residue.

Belongs to the protein-tyrosine phosphatase family. Receptor class 2A subfamily.

Its subcellular location is the membrane. The catalysed reaction is O-phospho-L-tyrosyl-[protein] + H2O = L-tyrosyl-[protein] + phosphate. Its function is as follows. Possible cell adhesion receptor. It possesses an intrinsic protein tyrosine phosphatase activity (PTPase). Functionally, the first PTPase domain has enzymatic activity, while the second one seems to affect the substrate specificity of the first one. The sequence is that of Receptor-type tyrosine-protein phosphatase F (ptprf) from Danio rerio (Zebrafish).